Consider the following 337-residue polypeptide: MGHAHAPRRGSLGYSPRVRARSQKPKMRNWAELGDQPKIQGFVGFKAGMSHIVMVDDRPHSATEGMEISVPVTIVEAPQMHVAGIRVYDDSPYGKKVIGEAWISDLKMLESLTHLPKNGYKTDEQLAKIAELVKKGVVADLRVMTVTLTSEVSGIPKKVPELMENRIAGGDMAKRFEFAKSLMGKAVGIKDVFAPGELVDVSAITKGYGTQGPVVRWGIATQKRKHARTGKKRHVGNLGPWNPHRIRWQVPQLGQTGYHQRTEYNKRILKMGDKAEEITPAGGFLHYGLIRNDYIMLKGSIPGPVKRMVRIRPAVRPKNMPKQAPEITYLSTQSKMG.

Positions 1–26 (MGHAHAPRRGSLGYSPRVRARSQKPK) are disordered.

It belongs to the universal ribosomal protein uL3 family. Part of the 50S ribosomal subunit. Forms a cluster with proteins L14 and L24e.

One of the primary rRNA binding proteins, it binds directly near the 3'-end of the 23S rRNA, where it nucleates assembly of the 50S subunit. The sequence is that of Large ribosomal subunit protein uL3 from Methanocella arvoryzae (strain DSM 22066 / NBRC 105507 / MRE50).